A 209-amino-acid polypeptide reads, in one-letter code: Thymidylate kinase (209 aa).

7–14 (GVEGSGKS) lines the ATP pocket.

The protein belongs to the thymidylate kinase family.

The catalysed reaction is dTMP + ATP = dTDP + ADP. Its function is as follows. Phosphorylation of dTMP to form dTDP in both de novo and salvage pathways of dTTP synthesis. This Solidesulfovibrio magneticus (strain ATCC 700980 / DSM 13731 / RS-1) (Desulfovibrio magneticus) protein is Thymidylate kinase.